Here is a 334-residue protein sequence, read N- to C-terminus: Fructose-1,6-bisphosphatase class 1 (334 aa).

Mg(2+)-binding residues include Glu90, Asp113, Leu115, and Asp116. Substrate contacts are provided by residues 116–119 (DGSS), Asn209, Tyr242, and Lys272. Residue Glu278 participates in Mg(2+) binding.

This sequence belongs to the FBPase class 1 family. In terms of assembly, homotetramer. The cofactor is Mg(2+).

It localises to the cytoplasm. It carries out the reaction beta-D-fructose 1,6-bisphosphate + H2O = beta-D-fructose 6-phosphate + phosphate. Its pathway is carbohydrate biosynthesis; gluconeogenesis. The sequence is that of Fructose-1,6-bisphosphatase class 1 from Actinobacillus pleuropneumoniae serotype 7 (strain AP76).